The sequence spans 237 residues: Uridylate kinase (237 aa).

ATP is bound at residue 10–13; sequence KLSG. Residue G51 coordinates UMP. The ATP site is built by G52 and R56. Residues D71 and 133 to 140 contribute to the UMP site; that span reads TGNPCFTT. The ATP site is built by T160, Y166, and D169.

This sequence belongs to the UMP kinase family. In terms of assembly, homohexamer.

It localises to the cytoplasm. The catalysed reaction is UMP + ATP = UDP + ADP. It functions in the pathway pyrimidine metabolism; CTP biosynthesis via de novo pathway; UDP from UMP (UMPK route): step 1/1. Inhibited by UTP. In terms of biological role, catalyzes the reversible phosphorylation of UMP to UDP. The polypeptide is Uridylate kinase (Vesicomyosocius okutanii subsp. Calyptogena okutanii (strain HA)).